The sequence spans 677 residues: UvrABC system protein B (677 aa).

The region spanning 24-412 is the Helicase ATP-binding domain; it reads EGVLQGVPAQ…EGIVVEQVIR (389 aa). Residue 37–44 participates in ATP binding; the sequence is GVTGSGKT. Positions 90 to 113 match the Beta-hairpin motif; that stretch reads YYDYYQPEAYLPNSDTYIEKDLAI. A Helicase C-terminal domain is found at 429–591; that stretch reads QIDDLMEEIQ…ITPQQIKKAR (163 aa). The region spanning 636-671 is the UVR domain; sequence EKSIERTRKLMQEAAKKLEFIEAAQYRNELLKLEDL.

It belongs to the UvrB family. In terms of assembly, forms a heterotetramer with UvrA during the search for lesions. Interacts with UvrC in an incision complex.

Its subcellular location is the cytoplasm. The UvrABC repair system catalyzes the recognition and processing of DNA lesions. A damage recognition complex composed of 2 UvrA and 2 UvrB subunits scans DNA for abnormalities. Upon binding of the UvrA(2)B(2) complex to a putative damaged site, the DNA wraps around one UvrB monomer. DNA wrap is dependent on ATP binding by UvrB and probably causes local melting of the DNA helix, facilitating insertion of UvrB beta-hairpin between the DNA strands. Then UvrB probes one DNA strand for the presence of a lesion. If a lesion is found the UvrA subunits dissociate and the UvrB-DNA preincision complex is formed. This complex is subsequently bound by UvrC and the second UvrB is released. If no lesion is found, the DNA wraps around the other UvrB subunit that will check the other stand for damage. The chain is UvrABC system protein B from Bacteroides thetaiotaomicron (strain ATCC 29148 / DSM 2079 / JCM 5827 / CCUG 10774 / NCTC 10582 / VPI-5482 / E50).